We begin with the raw amino-acid sequence, 382 residues long: Alanine racemase (382 aa).

Lys-37 functions as the Proton acceptor; specific for D-alanine in the catalytic mechanism. Lys-37 carries the N6-(pyridoxal phosphate)lysine modification. Arg-135 is a binding site for substrate. The active-site Proton acceptor; specific for L-alanine is the Tyr-267. Met-315 is a binding site for substrate.

It belongs to the alanine racemase family. Requires pyridoxal 5'-phosphate as cofactor.

The catalysed reaction is L-alanine = D-alanine. It participates in amino-acid biosynthesis; D-alanine biosynthesis; D-alanine from L-alanine: step 1/1. Catalyzes the interconversion of L-alanine and D-alanine. May also act on other amino acids. This Geobacter sulfurreducens (strain ATCC 51573 / DSM 12127 / PCA) protein is Alanine racemase (alr).